We begin with the raw amino-acid sequence, 593 residues long: Cryptochrome-2 (593 aa).

The region spanning 22-151 (ASSVHWFRKG…EVVTENSHTL (130 aa)) is the Photolyase/cryptochrome alpha/beta domain. Residue Lys-30 forms a Glycyl lysine isopeptide (Lys-Gly) (interchain with G-Cter in ubiquitin) linkage. The residue at position 90 (Ser-90) is a Phosphoserine. Glycyl lysine isopeptide (Lys-Gly) (interchain with G-Cter in ubiquitin) cross-links involve residues Lys-126 and Lys-242. Ser-266 carries the post-translational modification Phosphoserine; by MAPK. Residue Ser-271 coordinates FAD. Position 299 is a phosphoserine (Ser-299). An FAD-binding site is contributed by Gln-308. Residue Lys-348 forms a Glycyl lysine isopeptide (Lys-Gly) (interchain with G-Cter in ubiquitin) linkage. Residues His-374 and 406-408 (DAD) each bind FAD. Residues 390-489 (WVSWESGVRV…IIGVDYPRPI (100 aa)) are required for inhibition of CLOCK-BMAL1-mediated transcription. Glycyl lysine isopeptide (Lys-Gly) (interchain with G-Cter in ubiquitin) cross-links involve residues Lys-475 and Lys-504. The interval 532-593 (PVAEPSSSQA…PTPELPSKDA (62 aa)) is disordered. The segment covering 537–548 (SSSQAGSMSSAG) has biased composition (low complexity). Phosphoserine; by GSK3-beta is present on Ser-554. Ser-558 carries the phosphoserine; by DYRK1A and MAPK modification.

Belongs to the DNA photolyase class-1 family. As to quaternary structure, component of the circadian core oscillator, which includes the CRY proteins, CLOCK or NPAS2, BMAL1 or BMAL2, CSNK1D and/or CSNK1E, TIMELESS, and the PER proteins. Interacts with TIMELESS. Interacts directly with PER1, PER2 and PER3; interaction with PER2 inhibits its ubiquitination and vice versa. Interacts with CLOCK-BMAL1. Interacts with CLOCK. Interacts with BMAL1. Interacts with NFIL3. Interacts with FBXL3. Interacts with FBXL21. FBXL3, PER2 and the cofactor FAD compete for overlapping binding sites. FBXL3 cannot bind CRY2 that interacts already with PER2 or that contains bound FAD. Interacts with PPP5C (via TPR repeats); the interaction down-regulates the PPP5C phosphatase activity on CSNK1E. Interacts with nuclear receptors AR and NR3C1/GR; the interaction is ligand dependent. Interacts with PRKDC and CIART. Interacts with ISCA1 (in vitro). Interacts with DDB1, USP7 and TARDBP. Interacts with HNF4A. Interacts with PPARA. Interacts with PPARD (via domain NR LBD) and NR1I2 (via domain NR LBD) in a ligand-dependent manner. Interacts with PPARG, NR1I3 and VDR in a ligand-dependent manner. FAD serves as cofactor. It depends on (6R)-5,10-methylene-5,6,7,8-tetrahydrofolate as a cofactor. Phosphorylation on Ser-266 by MAPK is important for the inhibition of CLOCK-BMAL1-mediated transcriptional activity. Phosphorylation by CSKNE requires interaction with PER1 or PER2. Phosphorylated in a circadian manner at Ser-554 and Ser-558 in the suprachiasmatic nucleus (SCN) and liver. Phosphorylation at Ser-558 by DYRK1A promotes subsequent phosphorylation at Ser-554 by GSK3-beta: the two-step phosphorylation at the neighboring Ser residues leads to its proteasomal degradation. Post-translationally, ubiquitinated by the SCF(FBXL3) and SCF(FBXL21) complexes, regulating the balance between degradation and stabilization. The SCF(FBXL3) complex is mainly nuclear and mediates ubiquitination and subsequent degradation of CRY2. In contrast, cytoplasmic SCF(FBXL21) complex-mediated ubiquitination leads to stabilize CRY2 and counteract the activity of the SCF(FBXL3) complex. The SCF(FBXL3) and SCF(FBXL21) complexes probably mediate ubiquitination at different Lys residues. The SCF(FBXL3) complex recognizes and binds CRY2 phosphorylated at Ser-554 and Ser-558. Ubiquitination may be inhibited by PER2. Deubiquitinated by USP7. Expressed in all tissues examined including fetal brain, fibroblasts, heart, brain, placenta, lung, liver, skeletal muscle, kidney, pancreas, spleen, thymus, prostate, testis, ovary, small intestine, colon and leukocytes. Highest levels in heart and skeletal muscle.

It localises to the cytoplasm. It is found in the nucleus. KL001 (N-[3-(9H-carbazol-9-yl)-2-hydroxypropyl]-N-(2-furanylmethyl)-methanesulfonamide) binds to CRY1 and stabilizes it by inhibiting FBXL3- and ubiquitin-dependent degradation of CRY1 resulting in lengthening of the circadian periods. Functionally, transcriptional repressor which forms a core component of the circadian clock. The circadian clock, an internal time-keeping system, regulates various physiological processes through the generation of approximately 24 hour circadian rhythms in gene expression, which are translated into rhythms in metabolism and behavior. It is derived from the Latin roots 'circa' (about) and 'diem' (day) and acts as an important regulator of a wide array of physiological functions including metabolism, sleep, body temperature, blood pressure, endocrine, immune, cardiovascular, and renal function. Consists of two major components: the central clock, residing in the suprachiasmatic nucleus (SCN) of the brain, and the peripheral clocks that are present in nearly every tissue and organ system. Both the central and peripheral clocks can be reset by environmental cues, also known as Zeitgebers (German for 'timegivers'). The predominant Zeitgeber for the central clock is light, which is sensed by retina and signals directly to the SCN. The central clock entrains the peripheral clocks through neuronal and hormonal signals, body temperature and feeding-related cues, aligning all clocks with the external light/dark cycle. Circadian rhythms allow an organism to achieve temporal homeostasis with its environment at the molecular level by regulating gene expression to create a peak of protein expression once every 24 hours to control when a particular physiological process is most active with respect to the solar day. Transcription and translation of core clock components (CLOCK, NPAS2, BMAL1, BMAL2, PER1, PER2, PER3, CRY1 and CRY2) plays a critical role in rhythm generation, whereas delays imposed by post-translational modifications (PTMs) are important for determining the period (tau) of the rhythms (tau refers to the period of a rhythm and is the length, in time, of one complete cycle). A diurnal rhythm is synchronized with the day/night cycle, while the ultradian and infradian rhythms have a period shorter and longer than 24 hours, respectively. Disruptions in the circadian rhythms contribute to the pathology of cardiovascular diseases, cancer, metabolic syndromes and aging. A transcription/translation feedback loop (TTFL) forms the core of the molecular circadian clock mechanism. Transcription factors, CLOCK or NPAS2 and BMAL1 or BMAL2, form the positive limb of the feedback loop, act in the form of a heterodimer and activate the transcription of core clock genes and clock-controlled genes (involved in key metabolic processes), harboring E-box elements (5'-CACGTG-3') within their promoters. The core clock genes: PER1/2/3 and CRY1/2 which are transcriptional repressors form the negative limb of the feedback loop and interact with the CLOCK|NPAS2-BMAL1|BMAL2 heterodimer inhibiting its activity and thereby negatively regulating their own expression. This heterodimer also activates nuclear receptors NR1D1/2 and RORA/B/G, which form a second feedback loop and which activate and repress BMAL1 transcription, respectively. CRY1 and CRY2 have redundant functions but also differential and selective contributions at least in defining the pace of the SCN circadian clock and its circadian transcriptional outputs. Less potent transcriptional repressor in cerebellum and liver than CRY1, though less effective in lengthening the period of the SCN oscillator. Seems to play a critical role in tuning SCN circadian period by opposing the action of CRY1. With CRY1, dispensable for circadian rhythm generation but necessary for the development of intercellular networks for rhythm synchrony. May mediate circadian regulation of cAMP signaling and gluconeogenesis by blocking glucagon-mediated increases in intracellular cAMP concentrations and in CREB1 phosphorylation. Besides its role in the maintenance of the circadian clock, is also involved in the regulation of other processes. Plays a key role in glucose and lipid metabolism modulation, in part, through the transcriptional regulation of genes involved in these pathways, such as LEP or ACSL4. Represses glucocorticoid receptor NR3C1/GR-induced transcriptional activity by binding to glucocorticoid response elements (GREs). Represses the CLOCK-BMAL1 induced transcription of BHLHE40/DEC1. Represses the CLOCK-BMAL1 induced transcription of NAMPT. Represses PPARD and its target genes in the skeletal muscle and limits exercise capacity. Represses the transcriptional activity of NR1I2. The sequence is that of Cryptochrome-2 (CRY2) from Homo sapiens (Human).